A 258-amino-acid chain; its full sequence is Gamma carbonic anhydrase 3, mitochondrial (258 aa).

The N-terminal 43 residues, 1–43 (MGTMGKAFYSVGFWIRETGQALDRLGCRLQGKNHFREQLSRHR), are a transit peptide targeting the mitochondrion. Residues 86–88 (RGD) and 101–102 (QD) each bind substrate. H107, H130, and H135 together coordinate Zn(2+). Position 209 (N209) interacts with substrate.

Belongs to the gamma-class carbonic anhydrase family. In terms of assembly, homotrimer. Component of the oxidoreductase respiratory chain complex I; element of the extra matrix-exposed domain, which is attached to the membrane arm of this complex. It depends on Zn(2+) as a cofactor.

It is found in the mitochondrion membrane. Enzyme involved in the catabolism of H(2)CO(3) but that does not mediates the reversible hydration of carbon dioxide. Mediates complex I assembly in mitochondria and respiration. In Arabidopsis thaliana (Mouse-ear cress), this protein is Gamma carbonic anhydrase 3, mitochondrial (GAMMACA3).